The sequence spans 497 residues: Glutamate--tRNA ligase (497 aa).

The short motif at 12–22 is the 'HIGH' region element; it reads PSPTGHLHIGN. A 'KMSKS' region motif is present at residues 259 to 263; the sequence is KLSKR. Lys262 lines the ATP pocket.

Belongs to the class-I aminoacyl-tRNA synthetase family. Glutamate--tRNA ligase type 1 subfamily. As to quaternary structure, monomer.

It localises to the cytoplasm. The enzyme catalyses tRNA(Glu) + L-glutamate + ATP = L-glutamyl-tRNA(Glu) + AMP + diphosphate. Functionally, catalyzes the attachment of glutamate to tRNA(Glu) in a two-step reaction: glutamate is first activated by ATP to form Glu-AMP and then transferred to the acceptor end of tRNA(Glu). In Lacticaseibacillus casei (strain BL23) (Lactobacillus casei), this protein is Glutamate--tRNA ligase.